A 129-amino-acid chain; its full sequence is Histone H2B.1 (129 aa).

Residues 1 to 19 are compositionally biased toward basic and acidic residues; that stretch reads MAPKAEKKPASKAPAEKKP. Residues 1–37 are disordered; the sequence is MAPKAEKKPASKAPAEKKPAAKKTASTDSKKRTKTRK. N6-acetyllysine; alternate is present on residues Lys7 and Lys8. Residues Lys7 and Lys8 each participate in a glycyl lysine isopeptide (Lys-Gly) (interchain with G-Cter in SUMO); alternate cross-link. A Phosphoserine modification is found at Ser11. Lys12 is subject to N6-acetyllysine. Residue Lys17 is modified to N6-acetyllysine; alternate. Lys17 participates in a covalent cross-link: Glycyl lysine isopeptide (Lys-Gly) (interchain with G-Cter in SUMO); alternate. Residue Lys18 forms a Glycyl lysine isopeptide (Lys-Gly) (interchain with G-Cter in SUMO) linkage. Lys123 is covalently cross-linked (Glycyl lysine isopeptide (Lys-Gly) (interchain with G-Cter in ubiquitin)).

The protein belongs to the histone H2B family. In terms of assembly, the nucleosome is a histone octamer containing two molecules each of H2A, H2B, H3 and H4 assembled in one H3-H4 heterotetramer and two H2A-H2B heterodimers. The octamer wraps approximately 147 bp of DNA. Monoubiquitinated by the UBC2-BRE1 complex to form H2BK123ub1. H2BK123ub1 gives a specific tag for epigenetic transcriptional activation and is also prerequisite for H3K4me and H3K79me formation. H2BK123ub1 also modulates the formation of double-strand breaks during meiosis and is a prerequisite for DNA-damage checkpoint activation. Post-translationally, phosphorylated by STE20 to form H2BS10ph during progression through meiotic prophase. May be correlated with chromosome condensation. In terms of processing, acetylated by GCN5 to form H2BK11ac and H2BK16ac. H2BK16ac can also be formed by ESA1. Acetylation of N-terminal lysines and particularly formation of H2BK11acK16ac has a positive effect on transcription. Sumoylation to form H2BK6su or H2BK7su, and probably also H2BK16su or H2BK17su, occurs preferentially near the telomeres and represses gene transcription.

The protein resides in the nucleus. It localises to the chromosome. Its function is as follows. Core component of nucleosome. Nucleosomes wrap and compact DNA into chromatin, limiting DNA accessibility to the cellular machineries which require DNA as a template. Histones thereby play a central role in transcription regulation, DNA repair, DNA replication and chromosomal stability. DNA accessibility is regulated via a complex set of post-translational modifications of histones, also called histone code, and nucleosome remodeling. The protein is Histone H2B.1 (HTB1) of Meyerozyma guilliermondii (strain ATCC 6260 / CBS 566 / DSM 6381 / JCM 1539 / NBRC 10279 / NRRL Y-324) (Yeast).